The primary structure comprises 534 residues: Probable protein kinase UbiB (534 aa).

Residues 23–43 traverse the membrane as a helical segment; the sequence is DLLFDLPLPWFLLALRFALPW. The 368-residue stretch at 125–492 folds into the Protein kinase domain; sequence RFDIEPLASA…WHKRKDDWFL (368 aa). Residues 131–139 and Lys-153 each bind ATP; that span reads LASASVAQV. Asp-288 functions as the Proton acceptor in the catalytic mechanism. 2 helical membrane-spanning segments follow: residues 490–510 and 512–532; these read WFLR…AAGG and LHEL…YLIV.

It belongs to the ABC1 family. UbiB subfamily.

It is found in the cell inner membrane. It functions in the pathway cofactor biosynthesis; ubiquinone biosynthesis [regulation]. Functionally, is probably a protein kinase regulator of UbiI activity which is involved in aerobic coenzyme Q (ubiquinone) biosynthesis. This Pseudomonas fluorescens (strain ATCC BAA-477 / NRRL B-23932 / Pf-5) protein is Probable protein kinase UbiB.